Here is a 79-residue protein sequence, read N- to C-terminus: Large ribosomal subunit protein uL29 (79 aa).

The protein belongs to the universal ribosomal protein uL29 family.

This chain is Large ribosomal subunit protein uL29, found in Tropheryma whipplei (strain TW08/27) (Whipple's bacillus).